Consider the following 387-residue polypeptide: tRNA pseudouridine synthase B (387 aa).

The Nucleophile role is filled by D43.

It belongs to the pseudouridine synthase TruB family. Type 1 subfamily.

The catalysed reaction is uridine(55) in tRNA = pseudouridine(55) in tRNA. Responsible for synthesis of pseudouridine from uracil-55 in the psi GC loop of transfer RNAs. This chain is tRNA pseudouridine synthase B, found in Bifidobacterium longum (strain DJO10A).